A 308-amino-acid polypeptide reads, in one-letter code: Taste receptor type 2 member 41 (308 aa).

The Extracellular segment spans residues 1 to 6; sequence MLSTVS. A helical membrane pass occupies residues 7-27; the sequence is VFFMSIFVLLCFLGILANGFI. Residues 28-60 are Cytoplasmic-facing; the sequence is VLMLSREWLWRGRLLPSDMILLSLGTSRFCQQC. The chain crosses the membrane as a helical span at residues 61-81; it reads VGLVNSFYYSLHLVEYSRSLA. Topologically, residues 82 to 90 are extracellular; the sequence is RQLISLHMD. The helical transmembrane segment at 91–111 threads the bilayer; it reads FLNSATFWFGTWLSVLFCIKI. Residues 112–128 lie on the Cytoplasmic side of the membrane; the sequence is ANFSHPAFLWLKWRFPA. The helical transmembrane segment at 129–149 threads the bilayer; sequence LVPWLLLGSILVSFIVTLMFF. The Extracellular portion of the chain corresponds to 150-184; the sequence is WGNHTVYQAFLRRKFSGNTTFKEWNRRLEIDYFMP. Residues N152 and N167 are each glycosylated (N-linked (GlcNAc...) asparagine). A helical transmembrane segment spans residues 185-205; the sequence is LKLVTTSIPCSLFLVSILLLI. Topologically, residues 206 to 239 are cytoplasmic; sequence NSLRRHSQRMQHNAHSLQDPNTQAHSRALKSLIS. Residues 240–260 traverse the membrane as a helical segment; that stretch reads FLVLYALSYVSMVIDATVVIS. Residues 261–264 are Extracellular-facing; the sequence is SDNV. A helical transmembrane segment spans residues 265–285; that stretch reads WYWPWQIILYLCMSVHPFILI. The Cytoplasmic portion of the chain corresponds to 286–308; the sequence is TNNLKFRGTFRQLLLLARGFWVT.

Belongs to the G-protein coupled receptor T2R family. Expressed in subsets of taste receptor cells of the tongue and palate epithelium and exclusively in gustducin-positive cells. Expressed in 15% taste bud cells in circumvallate and foliate papillae but only in 2% in fungiform papillae. Expressed in the duodenum, antrum and fundus (part of the stomach).

Its subcellular location is the membrane. Receptor that may play a role in the perception of bitterness and is gustducin-linked. May play a role in sensing the chemical composition of the gastrointestinal content. The activity of this receptor may stimulate alpha gustducin, mediate PLC-beta-2 activation and lead to the gating of TRPM5. This Rattus norvegicus (Rat) protein is Taste receptor type 2 member 41 (Tas2r41).